Consider the following 454-residue polypeptide: Rhizobactin siderophore biosynthesis protein RhbE (454 aa).

Ala-7 to Pro-13 contacts FAD.

Belongs to the lysine N(6)-hydroxylase/L-ornithine N(5)-oxygenase family. FAD serves as cofactor.

It participates in siderophore biosynthesis; rhizobactin biosynthesis. The chain is Rhizobactin siderophore biosynthesis protein RhbE (rhbE) from Rhizobium meliloti (strain 1021) (Ensifer meliloti).